Here is a 511-residue protein sequence, read N- to C-terminus: MSNPNYTSANGTSLSQYEVWFLTGSQHLYGEDVLKQVAAQSQEIADALNGSSDVPVKVVWKPVLTDSDAIRRTALEANADDSVIGVTAWMHTFSPAKMWIQGLDLLRKPLLHLHTQANVELPWADIDFDFMNLNQAAHGDREFGYIQSRLGIPRKTVVGHVSNPEVTRQVGVWQRASAGWAAVRTLKLTRFGDNMRNVAVTEGDKTEAELRFGVSVNTWSVNELADAVHGAAESDVDALVAEYERLYEVVPELKAGGARHESLRYSARIELGLRSFLEANGSAAFTTSFEDLGELRQLPGMAVQRLMADGYGFGAEGDWKTAILVRAAKVMGSGLPGGASLMEDYTYHLAPGQEKILGAHMLEVCPSLTATKPRVEIHPLGIGGKEDPVRMVFDTDAGPGVVVALSDMRDRFRLVANAVDVVDLDEPLPNLPVARALWSPKPDFATSAAAWLTAGAAHHTVLSTQVGMDVFEDFAEIAKTELLTIDEGTTIRQFKKELNWNAAYYRLAGGL.

Residues Glu316, Glu343, His360, and His459 each coordinate Mn(2+).

The protein belongs to the arabinose isomerase family. Requires Mn(2+) as cofactor.

It carries out the reaction beta-L-arabinopyranose = L-ribulose. It participates in carbohydrate degradation; L-arabinose degradation via L-ribulose; D-xylulose 5-phosphate from L-arabinose (bacterial route): step 1/3. Catalyzes the conversion of L-arabinose to L-ribulose. The sequence is that of L-arabinose isomerase from Arthrobacter sp. (strain FB24).